We begin with the raw amino-acid sequence, 398 residues long: S-adenosylmethionine synthase (398 aa).

H16 is a binding site for ATP. D18 is a binding site for Mg(2+). E51 is a binding site for K(+). L-methionine is bound by residues E64 and Q108. A flexible loop region spans residues 108–118; it reads QSADIAQGVDA. Residues 176–178, 242–243, D251, 257–258, A274, and K278 each bind ATP; these read DSK, KF, and RK. D251 provides a ligand contact to L-methionine. K282 is a binding site for L-methionine.

The protein belongs to the AdoMet synthase family. In terms of assembly, homotetramer; dimer of dimers. Mg(2+) is required as a cofactor. K(+) serves as cofactor.

Its subcellular location is the cytoplasm. It carries out the reaction L-methionine + ATP + H2O = S-adenosyl-L-methionine + phosphate + diphosphate. It functions in the pathway amino-acid biosynthesis; S-adenosyl-L-methionine biosynthesis; S-adenosyl-L-methionine from L-methionine: step 1/1. Its function is as follows. Catalyzes the formation of S-adenosylmethionine (AdoMet) from methionine and ATP. The overall synthetic reaction is composed of two sequential steps, AdoMet formation and the subsequent tripolyphosphate hydrolysis which occurs prior to release of AdoMet from the enzyme. The sequence is that of S-adenosylmethionine synthase from Nitrobacter hamburgensis (strain DSM 10229 / NCIMB 13809 / X14).